The sequence spans 407 residues: Argininosuccinate synthase (407 aa).

ATP-binding positions include Ala16–Ser24 and Ala44. L-citrulline is bound by residues Tyr96 and Ser101. Position 126 (Gly126) interacts with ATP. Positions 128, 132, and 133 each coordinate L-aspartate. Residue Asn132 participates in L-citrulline binding. Arg136, Ser185, Ser194, Glu270, and Tyr282 together coordinate L-citrulline.

It belongs to the argininosuccinate synthase family. Type 1 subfamily. In terms of assembly, homotetramer.

It localises to the cytoplasm. The catalysed reaction is L-citrulline + L-aspartate + ATP = 2-(N(omega)-L-arginino)succinate + AMP + diphosphate + H(+). Its pathway is amino-acid biosynthesis; L-arginine biosynthesis; L-arginine from L-ornithine and carbamoyl phosphate: step 2/3. This is Argininosuccinate synthase from Shewanella sediminis (strain HAW-EB3).